A 373-amino-acid polypeptide reads, in one-letter code: D-alanine--D-alanine ligase (373 aa).

Positions 156 to 363 (KKLWSAAGLP…YPTLLATMVE (208 aa)) constitute an ATP-grasp domain. 184 to 239 (LQRLGLPAYVKPARGGSSIGVSRVSSFDELPAAIAAARRHDPKVIVEAAINGRELE) provides a ligand contact to ATP. 3 residues coordinate Mg(2+): Asp318, Glu330, and Asn332.

The protein belongs to the D-alanine--D-alanine ligase family. Requires Mg(2+) as cofactor. It depends on Mn(2+) as a cofactor.

The protein resides in the cytoplasm. The enzyme catalyses 2 D-alanine + ATP = D-alanyl-D-alanine + ADP + phosphate + H(+). The protein operates within cell wall biogenesis; peptidoglycan biosynthesis. Its function is as follows. Cell wall formation. This is D-alanine--D-alanine ligase from Mycobacterium ulcerans (strain Agy99).